A 477-amino-acid chain; its full sequence is Bifunctional protein HldE (477 aa).

The segment at 1–318 is ribokinase; it reads MKVTLPEFER…ENAVRGRADT (318 aa). Lys-179 bears the N6-acetyllysine mark. Residue 195 to 198 coordinates ATP; the sequence is NLSE. Residue Asp-264 is part of the active site. Positions 344-477 are cytidylyltransferase; sequence MTNGVFDILH…IKKIQQDKKG (134 aa).

The protein in the N-terminal section; belongs to the carbohydrate kinase PfkB family. It in the C-terminal section; belongs to the cytidylyltransferase family. In terms of assembly, homodimer.

It carries out the reaction D-glycero-beta-D-manno-heptose 7-phosphate + ATP = D-glycero-beta-D-manno-heptose 1,7-bisphosphate + ADP + H(+). The enzyme catalyses D-glycero-beta-D-manno-heptose 1-phosphate + ATP + H(+) = ADP-D-glycero-beta-D-manno-heptose + diphosphate. It functions in the pathway nucleotide-sugar biosynthesis; ADP-L-glycero-beta-D-manno-heptose biosynthesis; ADP-L-glycero-beta-D-manno-heptose from D-glycero-beta-D-manno-heptose 7-phosphate: step 1/4. It participates in nucleotide-sugar biosynthesis; ADP-L-glycero-beta-D-manno-heptose biosynthesis; ADP-L-glycero-beta-D-manno-heptose from D-glycero-beta-D-manno-heptose 7-phosphate: step 3/4. Its pathway is bacterial outer membrane biogenesis; LPS core biosynthesis. Its function is as follows. Catalyzes the phosphorylation of D-glycero-D-manno-heptose 7-phosphate at the C-1 position to selectively form D-glycero-beta-D-manno-heptose-1,7-bisphosphate. Catalyzes the ADP transfer from ATP to D-glycero-beta-D-manno-heptose 1-phosphate, yielding ADP-D-glycero-beta-D-manno-heptose. The protein is Bifunctional protein HldE of Escherichia coli O157:H7.